The following is a 56-amino-acid chain: Photosystem II reaction center X protein (56 aa).

A helical membrane pass occupies residues 27–47; the sequence is IGSFLAAGALIVAPAAAALIW.

The protein belongs to the PsbX family. Type 2 subfamily. PSII consists of a core antenna complex that captures photons, and an electron transfer chain that converts photonic excitation into a charge separation. PSII forms dimeric complexes.

It localises to the cellular thylakoid membrane. Functionally, involved in the binding and/or turnover of quinones at the Q(B) site of Photosystem II. This is Photosystem II reaction center X protein from Prochlorococcus marinus (strain NATL2A).